A 54-amino-acid polypeptide reads, in one-letter code: UPF0391 membrane protein BMEI0373 (54 aa).

Transmembrane regions (helical) follow at residues 5–25 (VLVF…GIAG) and 29–48 (GIAQ…SLIA).

This sequence belongs to the UPF0391 family.

The protein localises to the cell membrane. The sequence is that of UPF0391 membrane protein BMEI0373 from Brucella melitensis biotype 1 (strain ATCC 23456 / CCUG 17765 / NCTC 10094 / 16M).